The following is a 122-amino-acid chain: Large ribosomal subunit protein uL14c (122 aa).

This sequence belongs to the universal ribosomal protein uL14 family. In terms of assembly, part of the 50S ribosomal subunit.

It is found in the plastid. The protein resides in the chloroplast. In terms of biological role, binds to 23S rRNA. This is Large ribosomal subunit protein uL14c from Anthoceros angustus (Hornwort).